Here is a 122-residue protein sequence, read N- to C-terminus: Small ribosomal subunit protein uS13 (122 aa).

The disordered stretch occupies residues 96–122 (LPVRGQRTKTNSRTRKGKRKTIAGKKK). The segment covering 101 to 122 (QRTKTNSRTRKGKRKTIAGKKK) has biased composition (basic residues).

This sequence belongs to the universal ribosomal protein uS13 family. As to quaternary structure, part of the 30S ribosomal subunit. Forms a loose heterodimer with protein S19. Forms two bridges to the 50S subunit in the 70S ribosome.

Its function is as follows. Located at the top of the head of the 30S subunit, it contacts several helices of the 16S rRNA. In the 70S ribosome it contacts the 23S rRNA (bridge B1a) and protein L5 of the 50S subunit (bridge B1b), connecting the 2 subunits; these bridges are implicated in subunit movement. Contacts the tRNAs in the A and P-sites. In Chlamydia trachomatis serovar L2 (strain ATCC VR-902B / DSM 19102 / 434/Bu), this protein is Small ribosomal subunit protein uS13.